The following is a 156-amino-acid chain: Small ribosomal subunit protein uS7 (156 aa).

Belongs to the universal ribosomal protein uS7 family. In terms of assembly, part of the 30S ribosomal subunit. Contacts proteins S9 and S11.

In terms of biological role, one of the primary rRNA binding proteins, it binds directly to 16S rRNA where it nucleates assembly of the head domain of the 30S subunit. Is located at the subunit interface close to the decoding center, probably blocks exit of the E-site tRNA. The sequence is that of Small ribosomal subunit protein uS7 from Mycoplasma mobile (strain ATCC 43663 / 163K / NCTC 11711) (Mesomycoplasma mobile).